Consider the following 215-residue polypeptide: Riboflavin synthase (215 aa).

2 Lumazine-binding repeats span residues 1-96 and 97-193; these read MFTG…FGGH and IVSG…EQFL. Residues 4–6, 47–49, 61–66, 100–102, Lys135, 144–146, and 158–163 each bind 2,4-dihydroxypteridine; these read GII, CLT, DVMSET, GHI, SLT, and SIIPHT.

As to quaternary structure, homotrimer.

The catalysed reaction is 2 6,7-dimethyl-8-(1-D-ribityl)lumazine + H(+) = 5-amino-6-(D-ribitylamino)uracil + riboflavin. It functions in the pathway cofactor biosynthesis; riboflavin biosynthesis; riboflavin from 2-hydroxy-3-oxobutyl phosphate and 5-amino-6-(D-ribitylamino)uracil: step 2/2. Its function is as follows. Catalyzes the dismutation of two molecules of 6,7-dimethyl-8-ribityllumazine, resulting in the formation of riboflavin and 5-amino-6-(D-ribitylamino)uracil. In Actinobacillus pleuropneumoniae (Haemophilus pleuropneumoniae), this protein is Riboflavin synthase (ribE).